Reading from the N-terminus, the 80-residue chain is uncharacterized protein (80 aa).

This is an uncharacterized protein from Invertebrate iridescent virus 6 (IIV-6).